We begin with the raw amino-acid sequence, 210 residues long: Ribosomal RNA small subunit methyltransferase G (210 aa).

Residues G75, F80, 98 to 100 (EST), 126 to 127 (AE), and R141 contribute to the S-adenosyl-L-methionine site.

Belongs to the methyltransferase superfamily. RNA methyltransferase RsmG family.

It localises to the cytoplasm. Specifically methylates the N7 position of a guanine in 16S rRNA. This chain is Ribosomal RNA small subunit methyltransferase G, found in Solibacter usitatus (strain Ellin6076).